We begin with the raw amino-acid sequence, 209 residues long: 3-demethoxyubiquinol 3-hydroxylase (209 aa).

Residues 23–36 show a composition bias toward low complexity; sequence PHATRAAPAPAQAP. A disordered region spans residues 23–42; the sequence is PHATRAAPAPAQAPGEMTDS. 6 residues coordinate Fe cation: Glu58, Glu88, His91, Glu140, Glu172, and His175.

This sequence belongs to the COQ7 family. Fe cation is required as a cofactor.

Its subcellular location is the cell membrane. The catalysed reaction is a 5-methoxy-2-methyl-3-(all-trans-polyprenyl)benzene-1,4-diol + AH2 + O2 = a 3-demethylubiquinol + A + H2O. It participates in cofactor biosynthesis; ubiquinone biosynthesis. In terms of biological role, catalyzes the hydroxylation of 2-nonaprenyl-3-methyl-6-methoxy-1,4-benzoquinol during ubiquinone biosynthesis. The protein is 3-demethoxyubiquinol 3-hydroxylase of Variovorax paradoxus (strain S110).